Reading from the N-terminus, the 239-residue chain is Leucine-rich repeat-containing protein 57 (239 aa).

Residue G2 is the site of N-myristoyl glycine attachment. LRR repeat units follow at residues 39–60 (NLRT…IIGK), 63–85 (LLKS…CNLK), 86–107 (KLET…FGQL), 109–130 (ALKT…LCCL), 132–153 (HLDV…VGEL), 154–175 (QAIE…ISCC), 177–197 (RLKV…PQSI), and 202–222 (QICL…RELE).

It is found in the membrane. The sequence is that of Leucine-rich repeat-containing protein 57 (Lrrc57) from Mus musculus (Mouse).